The following is a 216-amino-acid chain: Uracil phosphoribosyltransferase (216 aa).

Residues Arg84, Arg109, and 137-145 (DPMLATGGS) contribute to the 5-phospho-alpha-D-ribose 1-diphosphate site. Residues Ile202 and 207 to 209 (GDA) contribute to the uracil site. Asp208 contributes to the 5-phospho-alpha-D-ribose 1-diphosphate binding site.

The protein belongs to the UPRTase family. It depends on Mg(2+) as a cofactor.

It carries out the reaction UMP + diphosphate = 5-phospho-alpha-D-ribose 1-diphosphate + uracil. Its pathway is pyrimidine metabolism; UMP biosynthesis via salvage pathway; UMP from uracil: step 1/1. Allosterically activated by GTP. In terms of biological role, catalyzes the conversion of uracil and 5-phospho-alpha-D-ribose 1-diphosphate (PRPP) to UMP and diphosphate. In Nostoc sp. (strain PCC 7120 / SAG 25.82 / UTEX 2576), this protein is Uracil phosphoribosyltransferase.